A 452-amino-acid chain; its full sequence is Phosphoglucosamine mutase (452 aa).

The active-site Phosphoserine intermediate is serine 104. Mg(2+)-binding residues include serine 104, aspartate 246, aspartate 248, and aspartate 250. Residue serine 104 is modified to Phosphoserine.

This sequence belongs to the phosphohexose mutase family. Mg(2+) serves as cofactor. Activated by phosphorylation.

The catalysed reaction is alpha-D-glucosamine 1-phosphate = D-glucosamine 6-phosphate. Its function is as follows. Catalyzes the conversion of glucosamine-6-phosphate to glucosamine-1-phosphate. This chain is Phosphoglucosamine mutase, found in Streptomyces coelicolor (strain ATCC BAA-471 / A3(2) / M145).